Consider the following 988-residue polypeptide: DNA-binding protein SMUBP-2 (988 aa).

Residue Ala-2 is modified to N-acetylalanine. ATP-binding positions include 213 to 220 (GPPGTGKT), Gln-402, Tyr-441, and Glu-570. Positions 637 to 783 (TAFEYLDDIV…KARHITVSRR (147 aa)) are SS DNA-binding. Disordered regions lie at residues 651 to 722 (THEG…GGTD), 765 to 820 (LKHD…PHGS), and 835 to 872 (RQQG…ALPS). Over residues 702–718 (SQVQPQHSSKANGSDRT) the composition is skewed to polar residues. The region spanning 721–784 (TDRTEHFRAM…ARHITVSRRS (64 aa)) is the R3H domain. Residues 765–775 (LKHDSTGEGKA) are compositionally biased toward basic and acidic residues. A phosphoserine mark is found at Ser-797 and Ser-800. Positions 802–817 (AQAEPEPQVEQPVGQP) are enriched in low complexity. Polar residues predominate over residues 835–844 (RQQGCQAQSQ). The Nuclear localization signal motif lies at 857 to 861 (KKKKK). The AN1-type zinc-finger motif lies at 884–933 (VKADNTCSFTKCSASTTTLGQFCMHCSRRYCLSHHLPEIHGCGEKARAHA). 8 residues coordinate Zn(2+): Cys-890, Cys-895, Cys-906, Cys-909, Cys-914, His-917, His-923, and Cys-925. Positions 943-988 (LYAGSGTKDRALDPAKRAQLQRKLDKKLGELSSQRTSKKKEKERGT) are disordered. Residues 949 to 971 (TKDRALDPAKRAQLQRKLDKKLG) show a composition bias toward basic and acidic residues. Residues 957–986 (AKRAQLQRKLDKKLGELSSQRTSKKKEKER) are a coiled coil.

Belongs to the DNA2/NAM7 helicase family. As to quaternary structure, homooligomer. Interacts with RUVBL1. Interacts with RUVBL2. Interacts with GTF3C1. Interacts with ABT1. Interacts with ribosomes. As to expression, expressed in liver, skin, muscle, heart, brain, spleen and kidney.

The protein localises to the nucleus. It localises to the cytoplasm. The protein resides in the cell projection. It is found in the axon. It catalyses the reaction ATP + H2O = ADP + phosphate + H(+). 5' to 3' helicase that unwinds RNA and DNA duplexes in an ATP-dependent reaction. Specific to 5'-phosphorylated single-stranded guanine-rich sequences. May play a role in RNA metabolism, ribosome biogenesis or initiation of translation. May play a role in regulation of transcription. Interacts with tRNA-Tyr. The polypeptide is DNA-binding protein SMUBP-2 (Ighmbp2) (Rattus norvegicus (Rat)).